The chain runs to 136 residues: Large ribosomal subunit protein uL16c (136 aa).

The protein belongs to the universal ribosomal protein uL16 family. As to quaternary structure, part of the 50S ribosomal subunit.

It localises to the plastid. It is found in the chloroplast. The chain is Large ribosomal subunit protein uL16c from Chlamydomonas reinhardtii (Chlamydomonas smithii).